The following is a 339-amino-acid chain: Beta-ketoacyl-[acyl-carrier-protein] synthase III (339 aa).

Residues cysteine 119 and histidine 262 contribute to the active site. The interval glutamine 263 to arginine 267 is ACP-binding. Asparagine 292 is a catalytic residue.

Belongs to the thiolase-like superfamily. FabH family. In terms of assembly, homodimer.

It localises to the cytoplasm. The catalysed reaction is malonyl-[ACP] + acetyl-CoA + H(+) = 3-oxobutanoyl-[ACP] + CO2 + CoA. It functions in the pathway lipid metabolism; fatty acid biosynthesis. Its function is as follows. Catalyzes the condensation reaction of fatty acid synthesis by the addition to an acyl acceptor of two carbons from malonyl-ACP. Catalyzes the first condensation reaction which initiates fatty acid synthesis and may therefore play a role in governing the total rate of fatty acid production. Possesses both acetoacetyl-ACP synthase and acetyl transacylase activities. Its substrate specificity determines the biosynthesis of branched-chain and/or straight-chain of fatty acids. The sequence is that of Beta-ketoacyl-[acyl-carrier-protein] synthase III from Prochlorococcus marinus (strain MIT 9313).